The following is a 199-amino-acid chain: Large ribosomal subunit protein bL9 (199 aa).

Positions 169–199 (TGGFTEEYDPNAEPGEIPTELLEGGEEAAEA) are disordered.

The protein belongs to the bacterial ribosomal protein bL9 family.

In terms of biological role, binds to the 23S rRNA. The chain is Large ribosomal subunit protein bL9 from Novosphingobium aromaticivorans (strain ATCC 700278 / DSM 12444 / CCUG 56034 / CIP 105152 / NBRC 16084 / F199).